The sequence spans 1015 residues: Transposase for transposon Tn3 (1015 aa).

Belongs to the transposase 7 family.

Required for transposition of transposon Tn3. This is Transposase for transposon Tn3 (tnpA) from Escherichia coli.